We begin with the raw amino-acid sequence, 394 residues long: Nicotinate phosphoribosyltransferase (394 aa).

The residue at position 218 (histidine 218) is a Phosphohistidine; by autocatalysis.

The protein belongs to the NAPRTase family. Post-translationally, transiently phosphorylated on a His residue during the reaction cycle. Phosphorylation strongly increases the affinity for substrates and increases the rate of nicotinate D-ribonucleotide production. Dephosphorylation regenerates the low-affinity form of the enzyme, leading to product release.

It carries out the reaction nicotinate + 5-phospho-alpha-D-ribose 1-diphosphate + ATP + H2O = nicotinate beta-D-ribonucleotide + ADP + phosphate + diphosphate. It functions in the pathway cofactor biosynthesis; NAD(+) biosynthesis; nicotinate D-ribonucleotide from nicotinate: step 1/1. In terms of biological role, catalyzes the synthesis of beta-nicotinate D-ribonucleotide from nicotinate and 5-phospho-D-ribose 1-phosphate at the expense of ATP. This is Nicotinate phosphoribosyltransferase from Xylella fastidiosa (strain Temecula1 / ATCC 700964).